The chain runs to 147 residues: Arginine vasopressin-induced protein 1 (147 aa).

Disordered regions lie at residues M1–K24 and L104–H147. The span at A105–Y119 shows a compositional bias: polar residues. Residues H121–R134 show a composition bias toward basic residues. Polar residues predominate over residues G137–H147.

Functionally, may be involved in MAP kinase activation, epithelial sodium channel (ENaC) down-regulation and cell cycling. The protein is Arginine vasopressin-induced protein 1 (AVPI1) of Homo sapiens (Human).